A 354-amino-acid polypeptide reads, in one-letter code: Rhodopsin (354 aa).

The Extracellular portion of the chain corresponds to 1-36 (MNGTEGPNFYVPMSNKTGVVRSPFDYPQYYLAEPWQ). N-linked (GlcNAc...) asparagine glycans are attached at residues N2 and N15. Residues 37 to 61 (YSALAAYMFLLILLGLPINFMTLFV) traverse the membrane as a helical segment. The Cytoplasmic segment spans residues 62–73 (TIQHKKLRTPLN). Residues 74–96 (YILLNLVFANHFMVLCGFTVTMY) form a helical membrane-spanning segment. The Extracellular segment spans residues 97 to 110 (TSMHGYFIFGPTGC). C110 and C187 form a disulfide bridge. A helical transmembrane segment spans residues 111 to 133 (YIEGFFATLGGEVALWSLVVLAV). Positions 134–136 (ERY) match the 'Ionic lock' involved in activated form stabilization motif. Residues 134–152 (ERYIVVCKPMANFRFGENH) lie on the Cytoplasmic side of the membrane. The helical transmembrane segment at 153 to 173 (AIMGVAFTWIMALSCAAPPLF) threads the bilayer. Topologically, residues 174–202 (GWSRYIPEGMQCSCGVDYYTLKPEVNNES) are extracellular. Residues 203–224 (FVIYMFIVHFTIPLIVIFFCYG) traverse the membrane as a helical segment. Topologically, residues 225–252 (RLLCTVKEAAAQQQESLTTQKAEKEVTR) are cytoplasmic. A helical transmembrane segment spans residues 253–274 (MVVIMVVFFLICWVPYAYVAFY). Residues 275–286 (IFTHQGSNFGPV) lie on the Extracellular side of the membrane. The helical transmembrane segment at 287-308 (FMTVPAFFAKSSAIYNPVIYIV) threads the bilayer. K296 is subject to N6-(retinylidene)lysine. Over 309-354 (LNKQFRNCLITTLCCGKNPFGDEDGSSAATSKTEASSVSSSQVSPA) the chain is Cytoplasmic. Residues C322 and C323 are each lipidated (S-palmitoyl cysteine). Residues 331–354 (EDGSSAATSKTEASSVSSSQVSPA) form a disordered region. Residues 334 to 354 (SSAATSKTEASSVSSSQVSPA) are compositionally biased toward low complexity.

Belongs to the G-protein coupled receptor 1 family. Opsin subfamily. In terms of processing, contains one covalently linked retinal chromophore. Upon light absorption, the covalently bound 11-cis-retinal is converted to all-trans-retinal. After hydrolysis of the Schiff base and release of the covalently bound all-trans-retinal, active rhodopsin is regenerated by binding of a fresh molecule of 11-cis-retinal.

The protein resides in the membrane. It localises to the cell projection. Its subcellular location is the cilium. It is found in the photoreceptor outer segment. Photoreceptor required for image-forming vision at low light intensity. Required for photoreceptor cell viability after birth. Light-induced isomerization of 11-cis to all-trans retinal triggers a conformational change that activates signaling via G-proteins. Subsequent receptor phosphorylation mediates displacement of the bound G-protein alpha subunit by arrestin and terminates signaling. The sequence is that of Rhodopsin (rho) from Xenopus laevis (African clawed frog).